We begin with the raw amino-acid sequence, 444 residues long: Biotin carboxylase 2 (444 aa).

The Biotin carboxylation domain maps to 1–444; that stretch reads MFTKVLIANR…VTTDFLKQHL (444 aa). ATP is bound by residues Lys116, Lys158, 164-165, 200-203, His208, and His235; these read GG and EKVI. The ATP-grasp domain occupies 120–317; that stretch reads RKAMEAAGVP…LVEQQLRIAA (198 aa). Lys237 is a binding site for hydrogencarbonate. Residues Glu275 and Glu288 each coordinate ATP. Mg(2+) is bound by residues Glu275, Glu288, and Asn290. Residues Glu275, Glu288, and Asn290 each coordinate Mn(2+). Positions 292, 295, and 338 each coordinate hydrogencarbonate. The active site involves Arg292. Arg338 provides a ligand contact to biotin.

In terms of assembly, acetyl-CoA carboxylase is a heterohexamer of biotin carboxyl carrier protein, biotin carboxylase and the two subunits of carboxyl transferase in a 2:2 complex. Mg(2+) serves as cofactor. The cofactor is Mn(2+).

The enzyme catalyses N(6)-biotinyl-L-lysyl-[protein] + hydrogencarbonate + ATP = N(6)-carboxybiotinyl-L-lysyl-[protein] + ADP + phosphate + H(+). It functions in the pathway lipid metabolism; malonyl-CoA biosynthesis; malonyl-CoA from acetyl-CoA: step 1/1. This protein is a component of the acetyl coenzyme A carboxylase complex; first, biotin carboxylase catalyzes the carboxylation of the carrier protein and then the transcarboxylase transfers the carboxyl group to form malonyl-CoA. This is Biotin carboxylase 2 (accC2) from Bacillus subtilis (strain 168).